The chain runs to 554 residues: MTRRDTTRVIRPATGPERTCKSWLTEAALRMLMNNLHPDVAERPEELVVYGGIGRAARDWESYDKIVETLRRLEDDETLLVQSGKPVGVFRTHADAPRVLIANSNLVPRWASWEHFNELDRKGLAMYGQMTAGSWIYIGAQGIVQGTYETFVEMGRQHYGGDLSGRWLLTAGLGGMGGAQPLAAVMAGAACLAIECQPSSIEMRLRTGYLDRSTDKVEEALAWIEESCAAKTPISVGLLGNAAELLPELFKRGVRPDLLTDQTSAHDPVNGYLPAGWSLERWHAMRDQDPPQVAEAAKASMAAHVKAMLDFQAAGVPTVDYGNNIRQMALEEGVTNAFDFPGFVPAYIRPLFCRGVGPFRWAALSGDPEDIAKTDAKVKELIPDNPHLHNWLDMAGQKIRFQGLPARICWVGLGDRHRLGLAFNEMVAKGELKAPIVIGRDHLDSGSVASPNRETEAMRDGSDAVSDWPLLNALLNTASGATWVSLHHGGGVGMGFSQHAGMVIVCDGTEAAAKRVARVLWNDPATGVMRHADAGYDIALACAREKGLDLPGIL.

NAD(+) contacts are provided by residues 51–52 (GG), glutamine 129, 175–177 (GMG), glutamate 195, 241–242 (NA), 262–266 (QTSAH), 272–273 (YL), and tyrosine 321. Cysteine 409 is a catalytic residue. Glycine 491 lines the NAD(+) pocket.

It belongs to the urocanase family. NAD(+) is required as a cofactor.

The protein resides in the cytoplasm. It carries out the reaction 4-imidazolone-5-propanoate = trans-urocanate + H2O. The protein operates within amino-acid degradation; L-histidine degradation into L-glutamate; N-formimidoyl-L-glutamate from L-histidine: step 2/3. In terms of biological role, catalyzes the conversion of urocanate to 4-imidazolone-5-propionate. This Caulobacter vibrioides (strain ATCC 19089 / CIP 103742 / CB 15) (Caulobacter crescentus) protein is Urocanate hydratase.